The primary structure comprises 264 residues: Adenosylcobinamide-GDP ribazoletransferase (264 aa).

The next 6 helical transmembrane spans lie at 39–59 (IAYAVPLAGAAIGLAGAAILI), 63–83 (ALGLPNLVAAILAVLTCVLLT), 121–141 (ACALVFSLLLRVALLDGLLAL), 148–168 (LALIAAASLSRAAGMLLLEFL), 201–221 (LLIVPSTGVGATLMAIGLSVL), and 241–261 (VAGAVQQLCEIAFLMGVLIYA).

The protein belongs to the CobS family. Requires Mg(2+) as cofactor.

The protein localises to the cell inner membrane. It carries out the reaction alpha-ribazole + adenosylcob(III)inamide-GDP = adenosylcob(III)alamin + GMP + H(+). The catalysed reaction is alpha-ribazole 5'-phosphate + adenosylcob(III)inamide-GDP = adenosylcob(III)alamin 5'-phosphate + GMP + H(+). The protein operates within cofactor biosynthesis; adenosylcobalamin biosynthesis; adenosylcobalamin from cob(II)yrinate a,c-diamide: step 7/7. Joins adenosylcobinamide-GDP and alpha-ribazole to generate adenosylcobalamin (Ado-cobalamin). Also synthesizes adenosylcobalamin 5'-phosphate from adenosylcobinamide-GDP and alpha-ribazole 5'-phosphate. This chain is Adenosylcobinamide-GDP ribazoletransferase, found in Azorhizobium caulinodans (strain ATCC 43989 / DSM 5975 / JCM 20966 / LMG 6465 / NBRC 14845 / NCIMB 13405 / ORS 571).